A 217-amino-acid chain; its full sequence is Cytidylate kinase (217 aa).

Residue 9–17 participates in ATP binding; that stretch reads GPAASGKSS.

Belongs to the cytidylate kinase family. Type 1 subfamily.

It localises to the cytoplasm. The enzyme catalyses CMP + ATP = CDP + ADP. It catalyses the reaction dCMP + ATP = dCDP + ADP. This is Cytidylate kinase from Bdellovibrio bacteriovorus (strain ATCC 15356 / DSM 50701 / NCIMB 9529 / HD100).